We begin with the raw amino-acid sequence, 277 residues long: Coiled-coil domain-containing protein 117 (277 aa).

The tract at residues 1–69 is disordered; the sequence is MAALGRPFSG…GRVSIHCRKK (69 aa). A compositionally biased stretch (low complexity) spans 26 to 37; the sequence is FAGRAFPPGAAG. Omega-N-methylarginine is present on R47. The residue at position 52 (S52) is a Phosphoserine. A compositionally biased stretch (basic residues) spans 58 to 69; it reads ARGRVSIHCRKK. Residues 139-166 adopt a coiled-coil conformation; that stretch reads QCEVARRRLQEIEDRIIDEDEEVESDRN. The interval 212-277 is disordered; that stretch reads LPELLPEKPK…ATSTEEEMEL (66 aa).

In terms of assembly, interacts with CIAO2B; the interaction is direct. Interacts with MMS19; the interaction is indirect.

It is found in the cytoplasm. It localises to the cytoskeleton. Its subcellular location is the spindle. The protein resides in the nucleus. In terms of biological role, facilitates DNA repair, cell cycle progression, and cell proliferation through its interaction with CIAO2B. This chain is Coiled-coil domain-containing protein 117, found in Mus musculus (Mouse).